A 334-amino-acid chain; its full sequence is Isopentenyl-diphosphate delta-isomerase (334 aa).

Residue Arg5–Lys6 participates in substrate binding. Residues Ala60–Thr62, Ser90, and Asn117 each bind FMN. Substrate is bound at residue Gln147. Residue Glu148 participates in Mg(2+) binding. Residues Lys179, Ser204, Thr209, Gly253–Arg255, and Ser274–Arg275 each bind FMN.

It belongs to the IPP isomerase type 2 family. As to quaternary structure, homooctamer. Dimer of tetramers. It depends on FMN as a cofactor. Requires NADPH as cofactor. Mg(2+) serves as cofactor.

It is found in the cytoplasm. It catalyses the reaction isopentenyl diphosphate = dimethylallyl diphosphate. Involved in the biosynthesis of isoprenoids. Catalyzes the 1,3-allylic rearrangement of the homoallylic substrate isopentenyl (IPP) to its allylic isomer, dimethylallyl diphosphate (DMAPP). This is Isopentenyl-diphosphate delta-isomerase from Streptococcus gordonii (strain Challis / ATCC 35105 / BCRC 15272 / CH1 / DL1 / V288).